The following is a 320-amino-acid chain: Beta-ketoacyl-[acyl-carrier-protein] synthase III (320 aa).

Residues Cys-114 and His-247 contribute to the active site. Positions 248–252 (QANRR) are ACP-binding. The active site involves Asn-277.

It belongs to the thiolase-like superfamily. FabH family. As to quaternary structure, homodimer.

It localises to the cytoplasm. The enzyme catalyses malonyl-[ACP] + acetyl-CoA + H(+) = 3-oxobutanoyl-[ACP] + CO2 + CoA. The protein operates within lipid metabolism; fatty acid biosynthesis. Functionally, catalyzes the condensation reaction of fatty acid synthesis by the addition to an acyl acceptor of two carbons from malonyl-ACP. Catalyzes the first condensation reaction which initiates fatty acid synthesis and may therefore play a role in governing the total rate of fatty acid production. Possesses both acetoacetyl-ACP synthase and acetyl transacylase activities. Its substrate specificity determines the biosynthesis of branched-chain and/or straight-chain of fatty acids. The sequence is that of Beta-ketoacyl-[acyl-carrier-protein] synthase III from Neisseria gonorrhoeae (strain ATCC 700825 / FA 1090).